Consider the following 246-residue polypeptide: Probable transcriptional regulatory protein SPO1072 (246 aa).

The disordered stretch occupies residues 1–22; it reads MAGHSKWANIQHRKGRQDAARS.

It belongs to the TACO1 family.

It is found in the cytoplasm. The polypeptide is Probable transcriptional regulatory protein SPO1072 (Ruegeria pomeroyi (strain ATCC 700808 / DSM 15171 / DSS-3) (Silicibacter pomeroyi)).